Reading from the N-terminus, the 239-residue chain is Pyridoxine 5'-phosphate synthase (239 aa).

Asn7 provides a ligand contact to 3-amino-2-oxopropyl phosphate. 9 to 10 provides a ligand contact to 1-deoxy-D-xylulose 5-phosphate; the sequence is DH. A 3-amino-2-oxopropyl phosphate-binding site is contributed by Arg18. The active-site Proton acceptor is the His43. 1-deoxy-D-xylulose 5-phosphate is bound by residues Arg45 and His50. Residue Glu70 is the Proton acceptor of the active site. Residue Thr100 coordinates 1-deoxy-D-xylulose 5-phosphate. Residue His191 is the Proton donor of the active site. Residues Gly192 and 213-214 each bind 3-amino-2-oxopropyl phosphate; that span reads GH.

This sequence belongs to the PNP synthase family. As to quaternary structure, homooctamer; tetramer of dimers.

Its subcellular location is the cytoplasm. The enzyme catalyses 3-amino-2-oxopropyl phosphate + 1-deoxy-D-xylulose 5-phosphate = pyridoxine 5'-phosphate + phosphate + 2 H2O + H(+). Its pathway is cofactor biosynthesis; pyridoxine 5'-phosphate biosynthesis; pyridoxine 5'-phosphate from D-erythrose 4-phosphate: step 5/5. Functionally, catalyzes the complicated ring closure reaction between the two acyclic compounds 1-deoxy-D-xylulose-5-phosphate (DXP) and 3-amino-2-oxopropyl phosphate (1-amino-acetone-3-phosphate or AAP) to form pyridoxine 5'-phosphate (PNP) and inorganic phosphate. This is Pyridoxine 5'-phosphate synthase from Citrifermentans bemidjiense (strain ATCC BAA-1014 / DSM 16622 / JCM 12645 / Bem) (Geobacter bemidjiensis).